A 275-amino-acid chain; its full sequence is Tryptophan synthase alpha chain (275 aa).

Residues Glu-49 and Asp-60 each act as proton acceptor in the active site.

This sequence belongs to the TrpA family. As to quaternary structure, tetramer of two alpha and two beta chains.

It catalyses the reaction (1S,2R)-1-C-(indol-3-yl)glycerol 3-phosphate + L-serine = D-glyceraldehyde 3-phosphate + L-tryptophan + H2O. The protein operates within amino-acid biosynthesis; L-tryptophan biosynthesis; L-tryptophan from chorismate: step 5/5. Its function is as follows. The alpha subunit is responsible for the aldol cleavage of indoleglycerol phosphate to indole and glyceraldehyde 3-phosphate. In Nitrosomonas europaea (strain ATCC 19718 / CIP 103999 / KCTC 2705 / NBRC 14298), this protein is Tryptophan synthase alpha chain.